Here is a 303-residue protein sequence, read N- to C-terminus: MDLDQWISKVKDGQHLSEDELQLLCEYVKEILIEESNVQPVNSPVTVCGDIHGQFHDLMKLFQTGGHVPDTNYIFMGDFVDRGYNSLEVFTILLLLKARYPANITLLRGNHESRQLTQVYGFYDECQRKYGNANAWRYCTDVFDYLTLSAIIDGTVLCVHGGLSPDVRTIDQIRLIERNCEIPHEGPFCDLMWSDPEDIETWAVSPRGAGWLFGSRVTTEFNHINKLDLVCRAHQLVQEGLKYMFQDKGLVTVWSAPNYCYRCGNVASILSFNDNMEREVKFFTETEENNQMRGPRTGVPYFL.

Asp50, His52, Asp78, and Asn110 together coordinate Zn(2+). His111 serves as the catalytic Proton donor. Zn(2+) is bound by residues His160 and His234.

This sequence belongs to the PPP phosphatase family. PP-6 (PP-V) subfamily. In terms of assembly, interacts with PHYA and PHYB, mostly when they are phosphorylated and in Pfr forms. Interacts with TAP46. Interacts with NRP. Interacts with PIN1 and PIN2. Interacts with ABI5. Interacts with PIF3 and PIF4. Protein phosphatase 6 (PP6) holoenzyme is a heterotrimeric complex formed by the catalytic subunit FYPP, a SAPS domain-containing subunit (SAL) and a protein phosphatase 2A regulatory subunit A (PP2AA). Zn(2+) is required as a cofactor. Mostly expressed in flowers. Also detected to a lower extent in stems and leaves. Expressed in roots.

The protein localises to the cytoplasm. It carries out the reaction O-phospho-L-seryl-[protein] + H2O = L-seryl-[protein] + phosphate. It catalyses the reaction O-phospho-L-threonyl-[protein] + H2O = L-threonyl-[protein] + phosphate. Functionally, catalytic subunit of protein phosphatase 6 (PP6). Dephosphorylates phosphorylated phytochromes, with a preference toward Pfr forms. Plays a major role in the photoperiodic control of flowering time in long days by modulating phytochrome signals in flowering time control. Involved in the regulation of polar auxin transport in roots. Dephosphorylates directly the auxin efflux carriers PIN1 and PIN2, thus promoting their proper polar localization in root cell plasma membrane. Acts antagonistically with the protein kinase PID to regulate the reversible phosphorylation of PIN and polar targeting, subsequently impacting polar auxin transport and plant development. Involved in the regulation of abscisic acid (ABA) signaling during seed germination and postgermination seedling growth. Functions as a negative regulator of ABA signaling through direct dephosphorylation and destabilization of ABI5 protein. Acts antagonistically with the protein kinase SRK2E/SNRK2.6 to regulate ABI5 phosphorylation and ABA responses. Involved in the regulation of phosphorylation status in hypocotyl phototropism. Involved in the negative regulation of photomorphogenesis by controlling the stability and transcriptional activity of PIF3 and PIF4 proteins in the dark, via the regulation of their phosphorylation status. The protein is Phytochrome-associated serine/threonine-protein phosphatase 3 of Arabidopsis thaliana (Mouse-ear cress).